The sequence spans 455 residues: Deoxyribodipyrimidine photo-lyase (455 aa).

Residues serine 2–threonine 131 form the Photolyase/cryptochrome alpha/beta domain. FAD-binding positions include tyrosine 219 and threonine 231–serine 235. Interaction with DNA regions lie at residues glutamine 266–histidine 273 and asparagine 330–arginine 331. Aspartate 361 to aspartate 363 lines the FAD pocket. Position 392 (glutamine 392) interacts with DNA.

This sequence belongs to the DNA photolyase class-1 family. Monomer. FAD is required as a cofactor. Requires coenzyme F420-(gamma-Glu)n as cofactor.

The catalysed reaction is cyclobutadipyrimidine (in DNA) = 2 pyrimidine residues (in DNA).. In terms of biological role, involved in repair of UV radiation-induced DNA damage. Catalyzes the light-dependent monomerization (300-600 nm) of cyclobutyl pyrimidine dimers (in cis-syn configuration), which are formed between adjacent bases on the same DNA strand upon exposure to ultraviolet radiation. The chain is Deoxyribodipyrimidine photo-lyase (phr) from Streptomyces griseus.